We begin with the raw amino-acid sequence, 72 residues long: Gas vesicle protein A (72 aa).

The protein belongs to the gas vesicle GvpA family. In terms of assembly, the gas vesicle shell is 2 nm thick and consists of a single layer of this protein. It forms helical ribs nearly perpendicular to the long axis of the vesicle.

The protein localises to the gas vesicle shell. In terms of biological role, gas vesicles are hollow, gas filled proteinaceous nanostructures found in some microorganisms. During planktonic growth they allow positioning of the organism at a favorable depth for light or nutrient acquisition. GvpA forms the protein shell. This Pseudanabaena galeata (strain PCC 6901) protein is Gas vesicle protein A.